The sequence spans 419 residues: Acyl-coenzyme A thioesterase 6 (419 aa).

Active-site charge relay system residues include S232, D324, and H358. The Peroxisome targeting signal motif lies at S417–L419.

This sequence belongs to the C/M/P thioester hydrolase family. Highly expressed in white adipose tissue. Detected at lower levels in kidney, liver, brown adipose tissue and brain.

Its subcellular location is the peroxisome. The enzyme catalyses pristanoyl-CoA + H2O = 2,6,10,14-tetramethylpentadecanoate + CoA + H(+). The catalysed reaction is phytanoyl-CoA + H2O = 3,7,11,15-tetramethylhexadecanoate + CoA + H(+). It participates in lipid metabolism; fatty acid metabolism. Its function is as follows. Catalyzes the hydrolysis of acyl-CoAs into free fatty acids and coenzyme A (CoASH), regulating their respective intracellular levels. Catalyzes the hydrolysis of phytanoyl-CoA and pristanoyl-CoA, two methyl-branched fatty acids derived from phytol, that enter the body via the diet. This chain is Acyl-coenzyme A thioesterase 6, found in Mus musculus (Mouse).